Reading from the N-terminus, the 210-residue chain is Transmembrane protein 61 (210 aa).

2 helical membrane-spanning segments follow: residues 18–38 and 69–89; these read YCMTVSGTVVLVAGTLCFAWW and VSFVCCGAGGLLLLIGLLWSV. The tract at residues 140-172 is disordered; that stretch reads VAEGPPTPPAYPTEEALEPSGSRDALLSTQPAW.

It localises to the membrane. In Homo sapiens (Human), this protein is Transmembrane protein 61 (TMEM61).